The primary structure comprises 117 residues: DNA-directed RNA polymerase subunit omega (117 aa).

Belongs to the RNA polymerase subunit omega family. As to quaternary structure, the RNAP catalytic core consists of 2 alpha, 1 beta, 1 beta' and 1 omega subunit. When a sigma factor is associated with the core the holoenzyme is formed, which can initiate transcription.

The enzyme catalyses RNA(n) + a ribonucleoside 5'-triphosphate = RNA(n+1) + diphosphate. Promotes RNA polymerase assembly. Latches the N- and C-terminal regions of the beta' subunit thereby facilitating its interaction with the beta and alpha subunits. This chain is DNA-directed RNA polymerase subunit omega, found in Ruegeria pomeroyi (strain ATCC 700808 / DSM 15171 / DSS-3) (Silicibacter pomeroyi).